Here is a 150-residue protein sequence, read N- to C-terminus: Anti-CBASS protein Acb1 (150 aa).

Tyrosine 11 is a binding site for 3',3'-cGAMP. Position 11 (tyrosine 11) interacts with 3',3'-cUAMP. Residues histidine 43 and threonine 45 contribute to the active site. Phenylalanine 73 lines the 3',3'-cGAMP pocket. Phenylalanine 73 is a 3',3'-cUAMP binding site. Catalysis depends on residues histidine 112 and threonine 114. Residues glutamate 142 and tryptophan 148 each contribute to the 3',3'-cGAMP site. Glutamate 142 and tryptophan 148 together coordinate 3',3'-cUAMP.

It belongs to the anti-CBASS protein Acb1 family.

It catalyses the reaction 3',3'-cUAMP + H2O = U[3'-5']pAp[3'] + H(+). The catalysed reaction is 3',3',3'-c-tri-AMP + H2O = A[3'-5']pA[3'-5']pAp[3'] + H(+). The enzyme catalyses 3',3',3'-cAAG + H2O = G[3'-5']pA[3'-5']pAp[3'] + H(+). It carries out the reaction 3',3',3'-cAAG + H2O = A[3'-5']pG[3'-5']pAp[3'] + H(+). It catalyses the reaction 3',3'-cGAMP + H2O = G[3'-5']pAp[3'] + H(+). In terms of biological role, counteracts the host CBASS antiviral defense system. Phosphodiesterase that enables metal-independent hydrolysis of the host cyclic di- and trinucleotide CBASS signals such as 3'3'-cGAMP, 3'3'cUA, and 3'3'3'-cAAA. Does not cleave cGG or cA4. Besides evasion of the CBASS system, might also enable evasion of the type III CRISPR systems that use cA3 signals. The sequence is that of Anti-CBASS protein Acb1 from Acinetobacter sp. (Acinetobacter phage 42).